The following is a 206-amino-acid chain: Glycerol-3-phosphate acyltransferase (206 aa).

Transmembrane regions (helical) follow at residues 4–24 (IIGI…LLVG), 55–75 (IIVL…PILL), 78–98 (ELHP…PVFA), 112–132 (MLLV…LTTL), 137–157 (MVSL…ITIG), and 158–178 (IVEQ…FVIF).

It belongs to the PlsY family. Probably interacts with PlsX.

It is found in the cell membrane. The catalysed reaction is an acyl phosphate + sn-glycerol 3-phosphate = a 1-acyl-sn-glycero-3-phosphate + phosphate. It participates in lipid metabolism; phospholipid metabolism. Catalyzes the transfer of an acyl group from acyl-phosphate (acyl-PO(4)) to glycerol-3-phosphate (G3P) to form lysophosphatidic acid (LPA). This enzyme utilizes acyl-phosphate as fatty acyl donor, but not acyl-CoA or acyl-ACP. In Exiguobacterium sibiricum (strain DSM 17290 / CCUG 55495 / CIP 109462 / JCM 13490 / 255-15), this protein is Glycerol-3-phosphate acyltransferase.